The primary structure comprises 135 residues: Large ribosomal subunit protein uL16c (135 aa).

Belongs to the universal ribosomal protein uL16 family. Part of the 50S ribosomal subunit.

The protein localises to the plastid. It is found in the chloroplast. The sequence is that of Large ribosomal subunit protein uL16c from Jasminum nudiflorum (Winter jasmine).